The chain runs to 245 residues: MKIDYLTLFPEMFEGVLNHSILKRAQDKGIINVNTINFRDYSINKHNQVDDYPFGGGQGMVLKPEPVFNAMEDINRNEHTRVILMCPQGRPFTQEIAQELSEAKHIVFICGHYEGYDERIRKHLVTDEISMGDYVLTGGELPAMTMTDAIVRLIPGVLGNQASHQDDSFSDGLLEFPQYTRPREYKNMSVPEVLLSGNHAHIDQWRHEQKLIRTYEKRPDLLEQYPLTEKDREILETYKKKLKND.

S-adenosyl-L-methionine contacts are provided by residues Gly111 and Met131 to Leu136.

It belongs to the RNA methyltransferase TrmD family. Homodimer.

It is found in the cytoplasm. It catalyses the reaction guanosine(37) in tRNA + S-adenosyl-L-methionine = N(1)-methylguanosine(37) in tRNA + S-adenosyl-L-homocysteine + H(+). In terms of biological role, specifically methylates guanosine-37 in various tRNAs. The protein is tRNA (guanine-N(1)-)-methyltransferase of Staphylococcus epidermidis (strain ATCC 35984 / DSM 28319 / BCRC 17069 / CCUG 31568 / BM 3577 / RP62A).